Consider the following 410-residue polypeptide: uncharacterized protein (410 aa).

Residues 178–187 (QKNHRNQLST) are compositionally biased toward polar residues. Disordered regions lie at residues 178–203 (QKNH…QEHQ) and 236–272 (RAEQ…PTVQ). Positions 188–198 (QKKQQQALQKA) are enriched in low complexity. A compositionally biased stretch (basic and acidic residues) spans 236-263 (RAEQAAREQEKREREALAQRQKAEEKRT).

This is an uncharacterized protein from Haemophilus influenzae (strain ATCC 51907 / DSM 11121 / KW20 / Rd).